A 334-amino-acid chain; its full sequence is Ketol-acid reductoisomerase (NADP(+)) (334 aa).

Positions 1–181 constitute a KARI N-terminal Rossmann domain; the sequence is MTTVYYDQSV…GATRAGVLET (181 aa). NADP(+) is bound by residues 25 to 28, Arg48, Ser52, and 82 to 85; these read YGSQ and DEIQ. His107 is a catalytic residue. Residue Gly133 participates in NADP(+) binding. One can recognise a KARI C-terminal knotted domain in the interval 182–327; it reads SFKEETETDL…RELRDMMPFI (146 aa). Residues Asp190, Glu194, Glu226, and Glu230 each contribute to the Mg(2+) site. Substrate is bound at residue Ser251.

The protein belongs to the ketol-acid reductoisomerase family. Requires Mg(2+) as cofactor.

It catalyses the reaction (2R)-2,3-dihydroxy-3-methylbutanoate + NADP(+) = (2S)-2-acetolactate + NADPH + H(+). It carries out the reaction (2R,3R)-2,3-dihydroxy-3-methylpentanoate + NADP(+) = (S)-2-ethyl-2-hydroxy-3-oxobutanoate + NADPH + H(+). Its pathway is amino-acid biosynthesis; L-isoleucine biosynthesis; L-isoleucine from 2-oxobutanoate: step 2/4. It functions in the pathway amino-acid biosynthesis; L-valine biosynthesis; L-valine from pyruvate: step 2/4. In terms of biological role, involved in the biosynthesis of branched-chain amino acids (BCAA). Catalyzes an alkyl-migration followed by a ketol-acid reduction of (S)-2-acetolactate (S2AL) to yield (R)-2,3-dihydroxy-isovalerate. In the isomerase reaction, S2AL is rearranged via a Mg-dependent methyl migration to produce 3-hydroxy-3-methyl-2-ketobutyrate (HMKB). In the reductase reaction, this 2-ketoacid undergoes a metal-dependent reduction by NADPH to yield (R)-2,3-dihydroxy-isovalerate. The sequence is that of Ketol-acid reductoisomerase (NADP(+)) from Staphylococcus saprophyticus subsp. saprophyticus (strain ATCC 15305 / DSM 20229 / NCIMB 8711 / NCTC 7292 / S-41).